Consider the following 376-residue polypeptide: MLVFYGFLSSRSISHLKVYLVGGAVRDQLLGLPVKEKDWVVVGATPEEMTARGFKPVGKEFPVFLHPETHEEYALARTERKVAKGYKGFTFYAAPDVSLEEDLKRRDLTINAIAETPEGQLIDPYGGQEDLKNKVLRHVSVAFQEDPVRVLRLARLATKFPDFSIHPDTLELMKKMVCAGEIDALVPERIWQELNRALGNEKPTRFFTVLNQCGALAILFPEIKMEGKGMAALQSVTDKTPSPLIRFATLQSDLPPEIIQKLAGRYRVPNEYADLAILVARFGSDYVNLNRMDETSLLNFLLKTDALRRQERFDQFIFTCDLISSTTSSQPKKIKEIIKAVKSVDIKPLQEKQLKGEAFAKALEKLRLEAIRTLIS.

The ATP site is built by G23 and R26. Positions 23 and 26 each coordinate CTP. The Mg(2+) site is built by E36 and D38. ATP-binding residues include R106, R152, and R155. 3 residues coordinate CTP: R106, R152, and R155.

It belongs to the tRNA nucleotidyltransferase/poly(A) polymerase family. Bacterial CCA-adding enzyme type 2 subfamily. Requires Mg(2+) as cofactor.

The catalysed reaction is a tRNA precursor + 2 CTP + ATP = a tRNA with a 3' CCA end + 3 diphosphate. It carries out the reaction a tRNA with a 3' CCA end + 2 CTP + ATP = a tRNA with a 3' CCACCA end + 3 diphosphate. Catalyzes the addition and repair of the essential 3'-terminal CCA sequence in tRNAs without using a nucleic acid template. Adds these three nucleotides in the order of C, C, and A to the tRNA nucleotide-73, using CTP and ATP as substrates and producing inorganic pyrophosphate. tRNA 3'-terminal CCA addition is required both for tRNA processing and repair. Also involved in tRNA surveillance by mediating tandem CCA addition to generate a CCACCA at the 3' terminus of unstable tRNAs. While stable tRNAs receive only 3'-terminal CCA, unstable tRNAs are marked with CCACCA and rapidly degraded. This chain is CCA-adding enzyme, found in Coxiella burnetii (strain RSA 331 / Henzerling II).